Here is a 214-residue protein sequence, read N- to C-terminus: Thymidylate kinase (214 aa).

10–17 (GGEGAGKS) lines the ATP pocket.

It belongs to the thymidylate kinase family.

It catalyses the reaction dTMP + ATP = dTDP + ADP. Functionally, phosphorylation of dTMP to form dTDP in both de novo and salvage pathways of dTTP synthesis. This Brucella abortus (strain S19) protein is Thymidylate kinase.